The following is a 491-amino-acid chain: Calcium/calmodulin-dependent protein kinase type II delta 1 chain (491 aa).

Residues 13–271 (YQLYEELGKG…AAEALKHPWI (259 aa)) form the Protein kinase domain. Residues 19–27 (LGKGAFSVV) and Lys-42 each bind ATP. Asp-135 acts as the Proton acceptor in catalysis. Thr-286 bears the Phosphothreonine mark. The residue at position 314 (Ser-314) is a Phosphoserine. A disordered region spans residues 315-354 (SKNPYKKPDGVKEPQTTVIHNPTDGNKESSESTNTTIEDE). Positions 328–338 (PQTTVIHNPTD) are enriched in polar residues. Thr-350 is subject to Phosphothreonine.

The protein belongs to the protein kinase superfamily. CAMK Ser/Thr protein kinase family. CaMK subfamily. As to quaternary structure, CAMK2 is composed of four different chains: alpha, beta, gamma, and delta. The different isoforms assemble into homo- or heteromultimeric holoenzymes composed of 8 to 12 subunits. As to expression, first detected at the 18-somite stage where expression is restricted to somite boundaries. At 24 hpf, expression is elevated in epidermal tissue and in the hatching gland. After 24 hpf, expression dimishes, but persists at low levels along the dorsal trunk. At 48 hpf, expression is restricted at a low level to the forebrain. At 72 hpf, weak expression reappears along the entire dorsal trunk in discrete cell bodies.

It carries out the reaction L-seryl-[protein] + ATP = O-phospho-L-seryl-[protein] + ADP + H(+). The catalysed reaction is L-threonyl-[protein] + ATP = O-phospho-L-threonyl-[protein] + ADP + H(+). With respect to regulation, autophosphorylation of CAMK2 plays an important role in the regulation of the kinase activity. In terms of biological role, caM-kinase II (CAMK2) is a prominent kinase in the central nervous system. The sequence is that of Calcium/calmodulin-dependent protein kinase type II delta 1 chain from Danio rerio (Zebrafish).